A 425-amino-acid chain; its full sequence is Dihydroorotase (425 aa).

Residues H61 and H63 each contribute to the Zn(2+) site. Substrate contacts are provided by residues H63–R65 and N95. The Zn(2+) site is built by K146, H175, H224, and D293. N6-carboxylysine is present on K146. The active site involves D293. Residues H297 and P311–G312 each bind substrate.

Belongs to the metallo-dependent hydrolases superfamily. DHOase family. Class I DHOase subfamily. Requires Zn(2+) as cofactor.

The catalysed reaction is (S)-dihydroorotate + H2O = N-carbamoyl-L-aspartate + H(+). It participates in pyrimidine metabolism; UMP biosynthesis via de novo pathway; (S)-dihydroorotate from bicarbonate: step 3/3. Its function is as follows. Catalyzes the reversible cyclization of carbamoyl aspartate to dihydroorotate. This is Dihydroorotase from Aeropyrum pernix (strain ATCC 700893 / DSM 11879 / JCM 9820 / NBRC 100138 / K1).